A 126-amino-acid chain; its full sequence is Large ribosomal subunit protein bL12 (126 aa).

This sequence belongs to the bacterial ribosomal protein bL12 family. Homodimer. Part of the ribosomal stalk of the 50S ribosomal subunit. Forms a multimeric L10(L12)X complex, where L10 forms an elongated spine to which 2 to 4 L12 dimers bind in a sequential fashion. Binds GTP-bound translation factors.

Forms part of the ribosomal stalk which helps the ribosome interact with GTP-bound translation factors. Is thus essential for accurate translation. The chain is Large ribosomal subunit protein bL12 from Prosthecochloris aestuarii (strain DSM 271 / SK 413).